The sequence spans 561 residues: Mesoderm induction early response protein 2 (561 aa).

2 disordered regions span residues 1–28 (MAEASSLERQSPGAASCLPHSLCPGEPN) and 52–188 (QNYG…EDPL). Ser11 bears the Phosphoserine mark. Positions 140-165 (QSSADDLTPSVTSHEASDLFPSQSGS) are enriched in polar residues. One can recognise an ELM2 domain in the interval 195 to 292 (KEIMVGPQFQ…EALRRLRFNV (98 aa)). One can recognise an SANT domain in the interval 297–349 (DGLCAWSEEERRNFEHGFRVHGKNFHLIQANKVRTRSVGECVEYYYLWKKSER). Residues 360 to 515 (GRRKYGPSGN…DGEPEETVGP (156 aa)) form a disordered region. The segment covering 417–428 (LSMGSSMSRSLG) has biased composition (low complexity). Over residues 439–451 (SSEPGPRLFPPLD) the composition is skewed to pro residues. The span at 453 to 482 (PSALPSSRRPPALAEPAFFPPATAAPEPGA) shows a compositional bias: low complexity.

Part of a complex containing at least CDYL, MIER1, MIER2, HDAC1 and HDAC2.

Its subcellular location is the nucleus. Functionally, transcriptional repressor. The polypeptide is Mesoderm induction early response protein 2 (MIER2) (Bos taurus (Bovine)).